The sequence spans 289 residues: 33 kDa chaperonin (289 aa).

Intrachain disulfides connect C237/C239 and C270/C273.

Belongs to the HSP33 family. Post-translationally, under oxidizing conditions two disulfide bonds are formed involving the reactive cysteines. Under reducing conditions zinc is bound to the reactive cysteines and the protein is inactive.

Its subcellular location is the cytoplasm. Redox regulated molecular chaperone. Protects both thermally unfolding and oxidatively damaged proteins from irreversible aggregation. Plays an important role in the bacterial defense system toward oxidative stress. The sequence is that of 33 kDa chaperonin from Oceanobacillus iheyensis (strain DSM 14371 / CIP 107618 / JCM 11309 / KCTC 3954 / HTE831).